Here is a 663-residue protein sequence, read N- to C-terminus: UvrABC system protein B (663 aa).

Residues 1-10 are compositionally biased toward basic and acidic residues; that stretch reads MIDKRDDKPF. Residues 1–23 are disordered; it reads MIDKRDDKPFKLKSKYKPSGDQP. The Helicase ATP-binding domain maps to 31–418; it reads DNIEGGEKAQ…TNTIIEQIIR (388 aa). 44-51 contacts ATP; the sequence is GATGTGKT. The Beta-hairpin signature appears at 97–120; it reads YYDYYQPEAYVPSSDTYIEKDSSV. One can recognise a Helicase C-terminal domain in the interval 435–601; the sequence is QMDDLLGEIN…TIKKDIRGLI (167 aa). In terms of domain architecture, UVR spans 627-662; the sequence is KEAINALQKQMQEAAELLDFELAAQMRDLILELKLM.

It belongs to the UvrB family. In terms of assembly, forms a heterotetramer with UvrA during the search for lesions. Interacts with UvrC in an incision complex.

The protein localises to the cytoplasm. Its function is as follows. The UvrABC repair system catalyzes the recognition and processing of DNA lesions. A damage recognition complex composed of 2 UvrA and 2 UvrB subunits scans DNA for abnormalities. Upon binding of the UvrA(2)B(2) complex to a putative damaged site, the DNA wraps around one UvrB monomer. DNA wrap is dependent on ATP binding by UvrB and probably causes local melting of the DNA helix, facilitating insertion of UvrB beta-hairpin between the DNA strands. Then UvrB probes one DNA strand for the presence of a lesion. If a lesion is found the UvrA subunits dissociate and the UvrB-DNA preincision complex is formed. This complex is subsequently bound by UvrC and the second UvrB is released. If no lesion is found, the DNA wraps around the other UvrB subunit that will check the other stand for damage. The polypeptide is UvrABC system protein B (Streptococcus pyogenes serotype M28 (strain MGAS6180)).